Reading from the N-terminus, the 166-residue chain is Lipoprotein signal peptidase (166 aa).

3 helical membrane passes run 10–30, 68–88, and 94–114; these read LIWL…KAWV, WQLW…AFWL, and GHWR…GNVI. Active-site residues include D124 and D142. The helical transmembrane segment at 138–158 threads the bilayer; the sequence is FNIADSAIVGGAIGIAVFGLF.

This sequence belongs to the peptidase A8 family.

It is found in the cell inner membrane. It catalyses the reaction Release of signal peptides from bacterial membrane prolipoproteins. Hydrolyzes -Xaa-Yaa-Zaa-|-(S,diacylglyceryl)Cys-, in which Xaa is hydrophobic (preferably Leu), and Yaa (Ala or Ser) and Zaa (Gly or Ala) have small, neutral side chains.. Its pathway is protein modification; lipoprotein biosynthesis (signal peptide cleavage). In terms of biological role, this protein specifically catalyzes the removal of signal peptides from prolipoproteins. In Xanthomonas oryzae pv. oryzae (strain MAFF 311018), this protein is Lipoprotein signal peptidase.